Consider the following 50-residue polypeptide: Sperm protamine P1 (50 aa).

Belongs to the protamine P1 family. As to expression, testis.

The protein localises to the nucleus. The protein resides in the chromosome. Its function is as follows. Protamines substitute for histones in the chromatin of sperm during the haploid phase of spermatogenesis. They compact sperm DNA into a highly condensed, stable and inactive complex. This is Sperm protamine P1 (PRM1) from Chilonatalus micropus (Cuban funnel-eared bat).